A 533-amino-acid chain; its full sequence is Amidophosphoribosyltransferase (533 aa).

Catalysis depends on cysteine 2, which acts as the Nucleophile. In terms of domain architecture, Glutamine amidotransferase type-2 spans cysteine 2–serine 238. Aspartate 383 and aspartate 384 together coordinate Mg(2+). Phosphoserine is present on serine 506.

In the C-terminal section; belongs to the purine/pyrimidine phosphoribosyltransferase family. It depends on Mg(2+) as a cofactor.

The enzyme catalyses 5-phospho-beta-D-ribosylamine + L-glutamate + diphosphate = 5-phospho-alpha-D-ribose 1-diphosphate + L-glutamine + H2O. Its pathway is purine metabolism; IMP biosynthesis via de novo pathway; N(1)-(5-phospho-D-ribosyl)glycinamide from 5-phospho-alpha-D-ribose 1-diphosphate: step 1/2. The chain is Amidophosphoribosyltransferase (ade4) from Schizosaccharomyces pombe (strain 972 / ATCC 24843) (Fission yeast).